A 102-amino-acid polypeptide reads, in one-letter code: Trp operon repressor homolog (102 aa).

The DNA-binding element occupies 59-82; that stretch reads QRQISQMLGVGIATITRGSNELKL.

The protein belongs to the TrpR family. As to quaternary structure, homodimer.

It is found in the cytoplasm. This protein is an aporepressor. When complexed with L-tryptophan it binds the operator region of the trp operon and prevents the initiation of transcription. The protein is Trp operon repressor homolog of Vibrio vulnificus (strain CMCP6).